The sequence spans 434 residues: Protein maelstrom homolog (434 aa).

The segment at residues 4–73 (RRASRNAYYF…AQGKDSGPSE (70 aa)) is a DNA-binding region (HMG box).

This sequence belongs to the maelstrom family. Interacts with SMARCB1, SIN3B and DDX4. Interacts with piRNA-associated proteins TDRD1, PIWIL1 and PIWIL2. Interacts with Tex19.1 and, probably, Tex19.2. Testis-specific. Present in spermatocytes and round and early elongating spermatids.

The protein resides in the cytoplasm. It is found in the nucleus. Its function is as follows. Plays a central role during spermatogenesis by repressing transposable elements and preventing their mobilization, which is essential for the germline integrity. Acts via the piRNA metabolic process, which mediates the repression of transposable elements during meiosis by forming complexes composed of piRNAs and Piwi proteins and governs the methylation and subsequent repression of transposons. Its association with piP-bodies suggests a participation in the secondary piRNAs metabolic process. Required for the localization of germ-cell factors to the meiotic nuage. The sequence is that of Protein maelstrom homolog from Mus musculus (Mouse).